The primary structure comprises 499 residues: Na(+)/H(+) antiporter NhaB (499 aa).

The next 11 helical transmembrane spans lie at 33–53, 66–86, 89–109, 128–148, 237–257, 305–325, 326–346, 349–369, 393–413, 449–469, and 477–497; these read PVIFLISPYIAGWVLILEFIF, PGGLLAIEAVLIGMVSPHTVY, VSGNLEVILLLVFMVAGIYFM, AILSLLFSLVAAVLSAFLDAL, FIEFFVRMAPISIPVLIAGLI, AIVALILVVALALHLAEVGLI, GLTVIILATAFCGVIEEHQIG, FEEALPFTSLLVVFFAVVGVI, MFFIANGVLSMISDNVFVATV, ATPNGQAAFLFLLTSAIAPLI, and VWMALPYTLVMGGLGYVMIVI.

The protein belongs to the NhaB Na(+)/H(+) (TC 2.A.34) antiporter family.

It localises to the cell inner membrane. The catalysed reaction is 2 Na(+)(in) + 3 H(+)(out) = 2 Na(+)(out) + 3 H(+)(in). Na(+)/H(+) antiporter that extrudes sodium in exchange for external protons. In Hahella chejuensis (strain KCTC 2396), this protein is Na(+)/H(+) antiporter NhaB.